The primary structure comprises 173 residues: Crossover junction endodeoxyribonuclease RuvC (173 aa).

Residues Asp11, Glu71, and Asp143 contribute to the active site. Mg(2+)-binding residues include Asp11, Glu71, and Asp143.

This sequence belongs to the RuvC family. As to quaternary structure, homodimer which binds Holliday junction (HJ) DNA. The HJ becomes 2-fold symmetrical on binding to RuvC with unstacked arms; it has a different conformation from HJ DNA in complex with RuvA. In the full resolvosome a probable DNA-RuvA(4)-RuvB(12)-RuvC(2) complex forms which resolves the HJ. It depends on Mg(2+) as a cofactor.

The protein localises to the cytoplasm. It catalyses the reaction Endonucleolytic cleavage at a junction such as a reciprocal single-stranded crossover between two homologous DNA duplexes (Holliday junction).. Its function is as follows. The RuvA-RuvB-RuvC complex processes Holliday junction (HJ) DNA during genetic recombination and DNA repair. Endonuclease that resolves HJ intermediates. Cleaves cruciform DNA by making single-stranded nicks across the HJ at symmetrical positions within the homologous arms, yielding a 5'-phosphate and a 3'-hydroxyl group; requires a central core of homology in the junction. The consensus cleavage sequence is 5'-(A/T)TT(C/G)-3'. Cleavage occurs on the 3'-side of the TT dinucleotide at the point of strand exchange. HJ branch migration catalyzed by RuvA-RuvB allows RuvC to scan DNA until it finds its consensus sequence, where it cleaves and resolves the cruciform DNA. This is Crossover junction endodeoxyribonuclease RuvC from Brucella suis biovar 1 (strain 1330).